We begin with the raw amino-acid sequence, 316 residues long: D-alanine--D-alanine ligase (316 aa).

The ATP-grasp domain occupies 109–304 (KRLWRGMDLP…FDEMVLQILA (196 aa)). Residue 135-190 (AADLGLPLIVKPAREGSSLGMMKVESIEALQSAYREAVIFDTAVFAERWLPGAEYT) coordinates ATP. Asp258, Glu271, and Asn273 together coordinate Mg(2+).

Belongs to the D-alanine--D-alanine ligase family. Mg(2+) is required as a cofactor. The cofactor is Mn(2+).

The protein resides in the cytoplasm. The enzyme catalyses 2 D-alanine + ATP = D-alanyl-D-alanine + ADP + phosphate + H(+). The protein operates within cell wall biogenesis; peptidoglycan biosynthesis. In terms of biological role, cell wall formation. The sequence is that of D-alanine--D-alanine ligase from Nitrosococcus oceani (strain ATCC 19707 / BCRC 17464 / JCM 30415 / NCIMB 11848 / C-107).